Reading from the N-terminus, the 1036-residue chain is Nitrogen catabolic enzyme regulatory protein (1036 aa).

The segment covering 1–17 (MAASTTTPTATTRPFFT) has biased composition (low complexity). Disordered regions lie at residues 1 to 126 (MAAS…HTQS), 207 to 240 (TDRTHRFSESAPQKSTSGIARLRKSSEQTQSQGS), 256 to 298 (TPAG…QSQH), 318 to 351 (GYLPRHLRKTSIDETSKRNPNRKRPADFSPHVSA), 590 to 743 (SSQG…PTTC), 792 to 976 (RGSG…PTTQ), and 1000 to 1028 (GMPNGQAGQMMGASSSSGPGSGPSRTGAE). Residues 23-34 (TEHDFRFPRRPG) are compositionally biased toward basic and acidic residues. A compositionally biased stretch (low complexity) spans 45-56 (AAMSSSSANNNH). 3 consecutive repeat copies span residues 49–55 (SSSANNN), 87–92 (SSSNNN), and 105–110 (SSSNNN). The tract at residues 49–110 (SSSANNNHNQ…INHQSSSNNN (62 aa)) is 3 X approximate repeats. A compositionally biased stretch (low complexity) spans 100–114 (NINHQSSSNNNISKN). Residues 652-661 (PRSQSQSFRQ) show a composition bias toward polar residues. The span at 703 to 714 (SSGLSSVPASRP) shows a compositional bias: low complexity. Residues 723 to 736 (QGSTTNLQGAAGNS) show a composition bias toward polar residues. The GATA-type zinc finger occupies 743–767 (CTNCFTQTTPLWRRNPDGQPLCNAC). The segment covering 802–827 (GTSTRSKKNASMSAAARKNSTLSITS) has biased composition (polar residues). Low complexity-rich tracts occupy residues 828-861 (NANNQPPAQVATPPAQQQVRASSVNESESPASGP) and 868-899 (AGSTPTSYHGSTGSTSGAVGGKSVIPIASAPP). Residues 927–961 (SAGSDQPVSAGAVSSSGMDVDSPANSTGSNETMPT) show a composition bias toward polar residues. Residues 1000-1023 (GMPNGQAGQMMGASSSSGPGSGPS) show a composition bias toward low complexity.

As to quaternary structure, interacts with nmr.

Its subcellular location is the nucleus. In terms of biological role, major nitrogen regulatory protein. During conditions of nitrogen limitation it turns on the expression of genes for enzymes which are required for the use of a variety of secondary nitrogen sources, including nitrates, purines, amino acids, and proteins. The polypeptide is Nitrogen catabolic enzyme regulatory protein (nit-2) (Neurospora crassa (strain ATCC 24698 / 74-OR23-1A / CBS 708.71 / DSM 1257 / FGSC 987)).